The following is a 337-amino-acid chain: Succinylglutamate desuccinylase (337 aa).

Zn(2+)-binding residues include histidine 59, glutamate 62, and histidine 152. The active site involves glutamate 216.

Belongs to the AspA/AstE family. Succinylglutamate desuccinylase subfamily. Zn(2+) is required as a cofactor.

The catalysed reaction is N-succinyl-L-glutamate + H2O = L-glutamate + succinate. Its pathway is amino-acid degradation; L-arginine degradation via AST pathway; L-glutamate and succinate from L-arginine: step 5/5. Its function is as follows. Transforms N(2)-succinylglutamate into succinate and glutamate. The protein is Succinylglutamate desuccinylase of Ectopseudomonas mendocina (strain ymp) (Pseudomonas mendocina).